Reading from the N-terminus, the 344-residue chain is Dihydroorotate dehydrogenase (quinone) (344 aa).

FMN-binding positions include 62 to 66 and Thr86; that span reads AGLDK. A substrate-binding site is contributed by Lys66. 111-115 contacts substrate; that stretch reads NRMGF. FMN-binding residues include Asn139 and Asn172. Asn172 contacts substrate. Ser175 acts as the Nucleophile in catalysis. Substrate is bound at residue Asn177. Positions 217 and 245 each coordinate FMN. Substrate is bound at residue 246-247; the sequence is NT. FMN-binding positions include Gly268, Gly297, and 318 to 319; that span reads YS.

The protein belongs to the dihydroorotate dehydrogenase family. Type 2 subfamily. Monomer. FMN serves as cofactor.

It is found in the cell membrane. The catalysed reaction is (S)-dihydroorotate + a quinone = orotate + a quinol. It participates in pyrimidine metabolism; UMP biosynthesis via de novo pathway; orotate from (S)-dihydroorotate (quinone route): step 1/1. Functionally, catalyzes the conversion of dihydroorotate to orotate with quinone as electron acceptor. The protein is Dihydroorotate dehydrogenase (quinone) of Chromobacterium violaceum (strain ATCC 12472 / DSM 30191 / JCM 1249 / CCUG 213 / NBRC 12614 / NCIMB 9131 / NCTC 9757 / MK).